A 485-amino-acid chain; its full sequence is UDP-N-acetylmuramoyl-L-alanyl-D-glutamate--2,6-diaminopimelate ligase (485 aa).

Ser28 provides a ligand contact to UDP-N-acetyl-alpha-D-muramoyl-L-alanyl-D-glutamate. Residue 108–114 (GTNGKTS) participates in ATP binding. UDP-N-acetyl-alpha-D-muramoyl-L-alanyl-D-glutamate contacts are provided by residues Asn147, 148-149 (TT), Ser175, and Arg183. At Lys215 the chain carries N6-carboxylysine. Meso-2,6-diaminopimelate contacts are provided by residues Arg374, 398-401 (DNPR), Gly449, and Glu453. The short motif at 398 to 401 (DNPR) is the Meso-diaminopimelate recognition motif element.

Belongs to the MurCDEF family. MurE subfamily. The cofactor is Mg(2+). In terms of processing, carboxylation is probably crucial for Mg(2+) binding and, consequently, for the gamma-phosphate positioning of ATP.

Its subcellular location is the cytoplasm. It carries out the reaction UDP-N-acetyl-alpha-D-muramoyl-L-alanyl-D-glutamate + meso-2,6-diaminopimelate + ATP = UDP-N-acetyl-alpha-D-muramoyl-L-alanyl-gamma-D-glutamyl-meso-2,6-diaminopimelate + ADP + phosphate + H(+). Its pathway is cell wall biogenesis; peptidoglycan biosynthesis. In terms of biological role, catalyzes the addition of meso-diaminopimelic acid to the nucleotide precursor UDP-N-acetylmuramoyl-L-alanyl-D-glutamate (UMAG) in the biosynthesis of bacterial cell-wall peptidoglycan. This is UDP-N-acetylmuramoyl-L-alanyl-D-glutamate--2,6-diaminopimelate ligase from Fusobacterium nucleatum subsp. nucleatum (strain ATCC 25586 / DSM 15643 / BCRC 10681 / CIP 101130 / JCM 8532 / KCTC 2640 / LMG 13131 / VPI 4355).